Consider the following 341-residue polypeptide: Aspartate carbamoyltransferase catalytic subunit (341 aa).

Residues R89 and T90 each contribute to the carbamoyl phosphate site. Position 117 (K117) interacts with L-aspartate. 3 residues coordinate carbamoyl phosphate: R139, H169, and Q172. R202 and R257 together coordinate L-aspartate. Carbamoyl phosphate contacts are provided by G298 and P299.

Belongs to the aspartate/ornithine carbamoyltransferase superfamily. ATCase family. As to quaternary structure, heterododecamer (2C3:3R2) of six catalytic PyrB chains organized as two trimers (C3), and six regulatory PyrI chains organized as three dimers (R2).

It catalyses the reaction carbamoyl phosphate + L-aspartate = N-carbamoyl-L-aspartate + phosphate + H(+). The protein operates within pyrimidine metabolism; UMP biosynthesis via de novo pathway; (S)-dihydroorotate from bicarbonate: step 2/3. Catalyzes the condensation of carbamoyl phosphate and aspartate to form carbamoyl aspartate and inorganic phosphate, the committed step in the de novo pyrimidine nucleotide biosynthesis pathway. This chain is Aspartate carbamoyltransferase catalytic subunit, found in Paraburkholderia phytofirmans (strain DSM 17436 / LMG 22146 / PsJN) (Burkholderia phytofirmans).